The sequence spans 258 residues: Synaptosomal-associated protein 29 (258 aa).

The segment at 1 to 41 (MSAYPKSYNPFDDDGEDEGARPAPWRDARDLPDGPDAPADR) is disordered. Positions 18–32 (EGARPAPWRDARDLP) are enriched in basic and acidic residues. A coiled-coil region spans residues 76 to 107 (ASSEELARQRGVLERTEKMVDKMDQDLKISQK). Phosphoserine occurs at positions 77, 78, and 114. Residues Thr130 and Thr137 each carry the phosphothreonine modification. The interval 150–191 (ISTSKEQEAKYQASHPNLRKLDDTDPVPRGAGSAMSTDAYPK) is disordered. Residues Ser163, Ser182, Ser185, Ser204, and Ser210 each carry the phosphoserine modification. The 63-residue stretch at 196 to 258 (RAYHQKIDSN…KSTERKVRQL (63 aa)) folds into the t-SNARE coiled-coil homology domain.

Belongs to the SNAP-25 family. Forms a SNARE complex, composed of VAMP8, SNAP29 and STX17, involved in fusion of autophagosome with lysosome. Interacts with multiple syntaxins including STX6. Interacts with EIPR1. Interacts with STX17; this interaction is increased in the absence of TMEM39A. As to quaternary structure, (Microbial infection) Interacts with Hantaan hantavirus nucleoprotein; this interaction prevents the breakdown of the viral glycoprotein N by virus-triggered autophagy. In terms of assembly, (Microbial infection) The interaction with STX17 is decreased in presence of SARS coronavirus-2/SARS-CoV-2 ORF3A protein. Found in brain, heart, kidney, liver, lung, placenta, skeletal muscle, spleen and pancreas.

Its subcellular location is the cytoplasm. It is found in the golgi apparatus membrane. The protein localises to the cytoplasmic vesicle. It localises to the autophagosome membrane. The protein resides in the cell projection. Its subcellular location is the cilium membrane. In terms of biological role, SNAREs, soluble N-ethylmaleimide-sensitive factor-attachment protein receptors, are essential proteins for fusion of cellular membranes. SNAREs localized on opposing membranes assemble to form a trans-SNARE complex, an extended, parallel four alpha-helical bundle that drives membrane fusion. SNAP29 is a SNARE involved in autophagy through the direct control of autophagosome membrane fusion with the lysososome membrane. Also plays a role in ciliogenesis by regulating membrane fusions. In Homo sapiens (Human), this protein is Synaptosomal-associated protein 29.